The following is a 198-amino-acid chain: Peroxiredoxin-2 (198 aa).

N-acetylalanine is present on Ala2. One can recognise a Thioredoxin domain in the interval Ala6–Tyr164. Cys51 functions as the Cysteine sulfenic acid (-SOH) intermediate in the catalytic mechanism. Residue Ser112 is modified to Phosphoserine. At Thr182 the chain carries Phosphothreonine. An N6-acetyllysine modification is found at Lys196.

This sequence belongs to the peroxiredoxin family. AhpC/Prx1 subfamily. As to quaternary structure, homodimer; disulfide-linked, upon oxidation. 5 homodimers assemble to form a ring-like decamer. Interacts with TIPIN. The enzyme can be inactivated by further oxidation of the cysteine sulfenic acid (C(P)-SOH) to sulphinic acid (C(P)-SO2H) instead of its condensation to a disulfide bond. It can be reactivated by forming a transient disulfide bond with sulfiredoxin SRXN1, which reduces the cysteine sulfinic acid in an ATP- and Mg-dependent manner. Post-translationally, acetylation increases resistance to transition to high molecular-mass complexes. Deacetylated by HDAC6 which decreases reducing activity.

Its subcellular location is the cytoplasm. The enzyme catalyses a hydroperoxide + [thioredoxin]-dithiol = an alcohol + [thioredoxin]-disulfide + H2O. Thiol-specific peroxidase that catalyzes the reduction of hydrogen peroxide and organic hydroperoxides to water and alcohols, respectively. Plays a role in cell protection against oxidative stress by detoxifying peroxides and as sensor of hydrogen peroxide-mediated signaling events. Might participate in the signaling cascades of growth factors and tumor necrosis factor-alpha by regulating the intracellular concentrations of H(2)O(2). This is Peroxiredoxin-2 (Prdx2) from Rattus norvegicus (Rat).